The primary structure comprises 736 residues: Oligopeptide transporter 6 (736 aa).

The next 15 membrane-spanning stretches (helical) occupy residues 43–63, 66–86, 116–136, 148–168, 210–230, 258–278, 288–308, 357–377, 412–432, 443–463, 489–511, 527–547, 602–622, 645–665, and 678–698; these read MWVLGIGACIVLSFINQFFWY, MPLSITGISAQIAVVPLGHLM, VLITIFANSGAGSVYATHILS, FLPAFLVMITTQILGFGWAGL, FFLIVLVASFAYYIFPGYLFT, LGIGSIGFDWVTISAYLGSPL, VAIGFVLVMYIVTPVCYWLNI, FFAVTYGLGFATLSATIVHVL, VPLWWFLVILLLNIALIMFIS, WWGVLLACAIAISFTPLIGVI, PVANMCFKVYGYISMTQALTFIS, FMAQVAGTLVAVVVYTGTAWW, WFFLVGAIAPLLVWLATKMFP, ATAVNFTSWLIVAFIFGHFIF, and VLSGGLDAGSAFMTILLFLAL.

The protein belongs to the oligopeptide OPT transporter (TC 2.A.67.1) family. Expressed in flowers and roots, and at a low level in leaves and stems. Detected in the cambial zone of the vascular bundles and in the region of lateral root initiation. Low expression in the vascular network of the petals and high in the stamen filaments and the gynoecium.

It localises to the membrane. Its function is as follows. Involved in the translocation of tetra- and pentapeptides across the cellular membrane in an energy-dependent manner. Also involved in transport of glutathione derivatives and metal complexes, and may be involved in stress resistance. The polypeptide is Oligopeptide transporter 6 (OPT6) (Arabidopsis thaliana (Mouse-ear cress)).